The sequence spans 256 residues: Probable aquaporin TIP4-2 (256 aa).

The next 5 membrane-spanning stretches (helical) occupy residues 25–45, 59–79, 86–108, 146–166, and 178–198; these read AVAGELLFTFLFVFIGVASTI, AVTAAAMAQALVVAVLATAGF, LNPAVTLSLAVGGHITLFRSALY, GVAAEAVFTFTLLLVICATIL, and PLLTGLLVGANTVAGGALTGA. The short motif at 87–89 is the NPA 1 element; it reads NPA. The short motif at 201-203 is the NPA 2 element; that stretch reads NPA. A helical membrane pass occupies residues 220-240; sequence VYWVGPLAGGPLAVVAYELLF.

It belongs to the MIP/aquaporin (TC 1.A.8) family. TIP (TC 1.A.8.10) subfamily. Expressed in roots, leaves and anthers.

It is found in the vacuole membrane. Aquaporins facilitate the transport of water and small neutral solutes across cell membranes. May be involved in transport from the vacuolar compartment to the cytoplasm. In Oryza sativa subsp. japonica (Rice), this protein is Probable aquaporin TIP4-2 (TIP4-2).